The sequence spans 198 residues: tRNA (pseudouridine(54)-N(1))-methyltransferase (198 aa).

Leu-128 serves as a coordination point for S-adenosyl-L-methionine.

It belongs to the methyltransferase superfamily. TrmY family. Homodimer.

It localises to the cytoplasm. The catalysed reaction is pseudouridine(54) in tRNA + S-adenosyl-L-methionine = N(1)-methylpseudouridine(54) in tRNA + S-adenosyl-L-homocysteine + H(+). In terms of biological role, specifically catalyzes the N1-methylation of pseudouridine at position 54 (Psi54) in tRNAs. This Natronomonas pharaonis (strain ATCC 35678 / DSM 2160 / CIP 103997 / JCM 8858 / NBRC 14720 / NCIMB 2260 / Gabara) (Halobacterium pharaonis) protein is tRNA (pseudouridine(54)-N(1))-methyltransferase.